The primary structure comprises 405 residues: Magnesium-protoporphyrin IX monomethyl ester [oxidative] cyclase, chloroplastic (405 aa).

The transit peptide at 1-44 (MAAEMALVKPITPKFINPMRTFSSSSKFSTIKMSATSQSNTTTT) directs the protein to the chloroplast. The segment covering 33 to 47 (MSATSQSNTTTTATK) has biased composition (low complexity). The segment at 33–54 (MSATSQSNTTTTATKPSKKGNK) is disordered.

It belongs to the AcsF family. Fe cation serves as cofactor.

The protein resides in the plastid. Its subcellular location is the chloroplast. The enzyme catalyses Mg-protoporphyrin IX 13-monomethyl ester + 3 NADPH + 3 O2 + 2 H(+) = 3,8-divinyl protochlorophyllide a + 3 NADP(+) + 5 H2O. It participates in porphyrin-containing compound metabolism; chlorophyll biosynthesis. Functionally, catalyzes the formation of the isocyclic ring in chlorophyll biosynthesis. Mediates the cyclase reaction, which results in the formation of divinylprotochlorophyllide (Pchlide) characteristic of all chlorophylls from magnesium-protoporphyrin IX 13-monomethyl ester (MgPMME). The sequence is that of Magnesium-protoporphyrin IX monomethyl ester [oxidative] cyclase, chloroplastic (CRD1) from Euphorbia esula (Leafy spurge).